The chain runs to 355 residues: MEELRVELKDKKYPIYIGYDILKKFLKNYRDNYSFSFIITHSFLYDLYKEDLEISQEGIIYVPVGEKSKSFKEVIRISRELAQRGADRKSAIFAFGGGVIGDLTGFVASIYMRGIRYIQIPTTLLAQVDSSIGGKTGINIKEGKNLIGTFYHPDAVIIDIKTLNTLPEREYRSGIAEVIKYGMIMNQSLFNFLEKNTTSILNKDIDILSHIIRESLICKKYVVEKDEKESSLRMILNFGHTFGHAIEAKGGYKRFLHGEAVAIGMFLATYLAYKIGFCDYSVLKRLQDTLLSFGFDLNNPYRIEDLVGYIKRDKKAYGGKIRLILPKEIGKVEIVENLEEKDIIKALKAGDGYGK.

Residues 98-102 (GVIGD), 122-123 (TT), K135, K144, and 162-165 (TLNT) each bind NAD(+). Zn(2+) contacts are provided by E177, H240, and H257.

The protein belongs to the sugar phosphate cyclases superfamily. Dehydroquinate synthase family. It depends on Co(2+) as a cofactor. Requires Zn(2+) as cofactor. The cofactor is NAD(+).

The protein resides in the cytoplasm. It catalyses the reaction 7-phospho-2-dehydro-3-deoxy-D-arabino-heptonate = 3-dehydroquinate + phosphate. It participates in metabolic intermediate biosynthesis; chorismate biosynthesis; chorismate from D-erythrose 4-phosphate and phosphoenolpyruvate: step 2/7. Functionally, catalyzes the conversion of 3-deoxy-D-arabino-heptulosonate 7-phosphate (DAHP) to dehydroquinate (DHQ). The chain is 3-dehydroquinate synthase from Dictyoglomus thermophilum (strain ATCC 35947 / DSM 3960 / H-6-12).